We begin with the raw amino-acid sequence, 380 residues long: N-acetylcysteine deacetylase (380 aa).

The Ni(2+) site is built by Cys-98, His-100, Glu-134, His-158, and His-350.

This sequence belongs to the peptidase M20 family. The cofactor is a divalent metal cation.

The catalysed reaction is N-acetyl-L-cysteine + H2O = L-cysteine + acetate. The protein operates within amino-acid biosynthesis; L-cysteine biosynthesis. In terms of biological role, probably catalyzes the deacetylation of N-acetylcysteine (NAC) to acetate and cysteine. Is involved in a S-(2-succino)cysteine (2SC) degradation pathway that allows B.subtilis to grow on 2SC as a sole sulfur source, via its metabolization to cysteine. This chain is N-acetylcysteine deacetylase, found in Bacillus subtilis (strain 168).